Consider the following 295-residue polypeptide: Bifunctional protein FolD (295 aa).

NADP(+) contacts are provided by residues 163–165 (GRS), Ser-188, and Ile-229.

The protein belongs to the tetrahydrofolate dehydrogenase/cyclohydrolase family. As to quaternary structure, homodimer.

It catalyses the reaction (6R)-5,10-methylene-5,6,7,8-tetrahydrofolate + NADP(+) = (6R)-5,10-methenyltetrahydrofolate + NADPH. The catalysed reaction is (6R)-5,10-methenyltetrahydrofolate + H2O = (6R)-10-formyltetrahydrofolate + H(+). The protein operates within one-carbon metabolism; tetrahydrofolate interconversion. In terms of biological role, catalyzes the oxidation of 5,10-methylenetetrahydrofolate to 5,10-methenyltetrahydrofolate and then the hydrolysis of 5,10-methenyltetrahydrofolate to 10-formyltetrahydrofolate. This is Bifunctional protein FolD from Hyphomonas neptunium (strain ATCC 15444).